A 267-amino-acid chain; its full sequence is Hydroxyethylthiazole kinase (267 aa).

Met42 contributes to the substrate binding site. ATP-binding residues include Cys118 and Thr162. Gly189 is a substrate binding site.

It belongs to the Thz kinase family. It depends on Mg(2+) as a cofactor.

It carries out the reaction 5-(2-hydroxyethyl)-4-methylthiazole + ATP = 4-methyl-5-(2-phosphooxyethyl)-thiazole + ADP + H(+). The protein operates within cofactor biosynthesis; thiamine diphosphate biosynthesis; 4-methyl-5-(2-phosphoethyl)-thiazole from 5-(2-hydroxyethyl)-4-methylthiazole: step 1/1. Its function is as follows. Catalyzes the phosphorylation of the hydroxyl group of 4-methyl-5-beta-hydroxyethylthiazole (THZ). This chain is Hydroxyethylthiazole kinase, found in Rubrobacter xylanophilus (strain DSM 9941 / JCM 11954 / NBRC 16129 / PRD-1).